A 430-amino-acid chain; its full sequence is MGQSVVVLGAQWGDEGKGKIVDLLTEEIGAVVRFQGGHNAGHTLVINGKKTVLHLIPSGILRDDALCLIGNGVVISPAALIKEIGELESAGVEVRSRLKISPAAPLIMPYHIALDQAREKAAGGKAIGTTGRGIGPAYEDKVARRGIRIADLHYPAQLEELLRTALDYHNFVLTKYLGVEAVDFQKTFDEALAFGEYVQPMKSDVAGILHDLRKQGKRVLFEGAQGALLDIDHGTYPYVTSSNTTVGGALAGTGVGADAIDYVLGIAKAYATRVGGGPFPTELDDEVGQGIRDRGAEYGASTGRPRRCGWMDIVALKRAVAINGISGLCITKLDVLDGMEKLKVCIAYEYRGKRTEYAPLDAQGWEECTPVYLEFPGWTENTHGITEWDKLPVAARAYLRALEELAGCPISIVSTGPDRDHTMVLQDPFA.

GTP contacts are provided by residues 13–19 and 41–43; these read GDEGKGK and GHT. D14 acts as the Proton acceptor in catalysis. Mg(2+)-binding residues include D14 and G41. IMP-binding positions include 14–17, 39–42, T130, R144, Q225, T240, and R304; these read DEGK and NAGH. H42 acts as the Proton donor in catalysis. 300–306 contacts substrate; the sequence is ASTGRPR. Residues R306, 332–334, and 414–416 each bind GTP; these read KLD and STG.

Belongs to the adenylosuccinate synthetase family. In terms of assembly, homodimer. Mg(2+) serves as cofactor.

The protein localises to the cytoplasm. The enzyme catalyses IMP + L-aspartate + GTP = N(6)-(1,2-dicarboxyethyl)-AMP + GDP + phosphate + 2 H(+). The protein operates within purine metabolism; AMP biosynthesis via de novo pathway; AMP from IMP: step 1/2. In terms of biological role, plays an important role in the de novo pathway of purine nucleotide biosynthesis. Catalyzes the first committed step in the biosynthesis of AMP from IMP. In Xanthomonas campestris pv. campestris (strain 8004), this protein is Adenylosuccinate synthetase.